The chain runs to 200 residues: 3-isopropylmalate dehydratase small subunit (200 aa).

It belongs to the LeuD family. LeuD type 1 subfamily. Heterodimer of LeuC and LeuD.

The catalysed reaction is (2R,3S)-3-isopropylmalate = (2S)-2-isopropylmalate. It participates in amino-acid biosynthesis; L-leucine biosynthesis; L-leucine from 3-methyl-2-oxobutanoate: step 2/4. Catalyzes the isomerization between 2-isopropylmalate and 3-isopropylmalate, via the formation of 2-isopropylmaleate. The protein is 3-isopropylmalate dehydratase small subunit of Vibrio vulnificus (strain YJ016).